The sequence spans 424 residues: Protein CLP1 homolog (424 aa).

Residues E19, K60, and 122-127 each bind ATP; that span reads DVGKST.

It belongs to the Clp1 family. Clp1 subfamily.

Its subcellular location is the nucleus. In terms of biological role, required for endonucleolytic cleavage during polyadenylation-dependent pre-mRNA 3'-end formation. The polypeptide is Protein CLP1 homolog (cbc) (Aedes aegypti (Yellowfever mosquito)).